Here is a 53-residue protein sequence, read N- to C-terminus: Photoreceptor disk component PRCD (53 aa).

Cysteine 2 carries the S-palmitoyl cysteine lipid modification. The tract at residues 24–53 is disordered; that stretch reads PEPSRVDGTVVGSGSDTDLQSTGREKGPVK. Residues 35–45 show a composition bias toward polar residues; the sequence is GSGSDTDLQST.

Belongs to the PRCD family. As to quaternary structure, interacts with RHO/rhodopsin; the interaction promotes PRCD stability. Palmitoylated at Cys-2. Palmitoylation is essential for protein stability and trafficking to the photoreceptor outer segment, but does not appear to be essential for membrane localization. Probably palmitoylated by ZDHHC3. In terms of processing, phosphorylated. In terms of tissue distribution, expressed in retina, where it localizes to both rod and cone photoreceptors (at protein level).

The protein localises to the cell projection. The protein resides in the cilium. It localises to the photoreceptor outer segment. It is found in the membrane. Its subcellular location is the endoplasmic reticulum. The protein localises to the golgi apparatus. In terms of biological role, involved in vision. The chain is Photoreceptor disk component PRCD from Mus musculus (Mouse).